The following is a 699-amino-acid chain: UvrABC system protein B (699 aa).

Residues 35 to 188 (ERINNGEKDV…DHLLRKFVSM (154 aa)) form the Helicase ATP-binding domain. 48-55 (GATGTGKS) is an ATP binding site. The Beta-hairpin signature appears at 101 to 124 (YYDYYQPEAYVAQTDTFIEKDSSI). Residues 438 to 604 (QIDDLLGEIR…PLRKKIADIT (167 aa)) form the Helicase C-terminal domain. A UVR domain is found at 654–689 (VGLIEQLTEQMHGAAAELQFEVAARIRDEVKELKRE).

It belongs to the UvrB family. As to quaternary structure, forms a heterotetramer with UvrA during the search for lesions. Interacts with UvrC in an incision complex.

Its subcellular location is the cytoplasm. Functionally, the UvrABC repair system catalyzes the recognition and processing of DNA lesions. A damage recognition complex composed of 2 UvrA and 2 UvrB subunits scans DNA for abnormalities. Upon binding of the UvrA(2)B(2) complex to a putative damaged site, the DNA wraps around one UvrB monomer. DNA wrap is dependent on ATP binding by UvrB and probably causes local melting of the DNA helix, facilitating insertion of UvrB beta-hairpin between the DNA strands. Then UvrB probes one DNA strand for the presence of a lesion. If a lesion is found the UvrA subunits dissociate and the UvrB-DNA preincision complex is formed. This complex is subsequently bound by UvrC and the second UvrB is released. If no lesion is found, the DNA wraps around the other UvrB subunit that will check the other stand for damage. This Paenarthrobacter aurescens (strain TC1) protein is UvrABC system protein B.